Reading from the N-terminus, the 352-residue chain is Guanidino acid hydrolase, mitochondrial (352 aa).

The N-terminal 35 residues, 1 to 35 (MLRLLASGCARGPGPGVGARPAAGLFHPGRRQSRQ), are a transit peptide targeting the mitochondrion. Residues 11–49 (RGPGPGVGARPAAGLFHPGRRQSRQASDAPRNQPPSPEF) are disordered. Mn(2+) contacts are provided by His-162, Asp-185, His-187, and Asp-189. Lys-193 bears the N6-acetyllysine mark. Lys-217 is subject to N6-acetyllysine; alternate. Residue Lys-217 is modified to N6-succinyllysine; alternate. Asp-276 and Asp-278 together coordinate Mn(2+).

It belongs to the ureohydrolase superfamily. Arginase family. Mn(2+) is required as a cofactor. As to expression, highly expressed in liver and kidney. Also found in skeletal muscle, fetal liver, brain, testis, skin and the gastrointestinal tract. Within brain, expression is higher in the cerebral cortex with lower levels in the medulla and spinal cord.

The protein resides in the mitochondrion. The catalysed reaction is 3-guanidinopropanoate + H2O = urea + beta-alanine. The enzyme catalyses 4-guanidinobutanoate + H2O = urea + 4-aminobutanoate. It catalyses the reaction taurocyamine + H2O = urea + taurine. It carries out the reaction L-arginine + H2O = urea + L-ornithine. The protein operates within nitrogen metabolism; urea cycle; L-ornithine and urea from L-arginine: step 1/1. Hydrolyzes linear guanidino acids to form urea and the corresponding amines. Displays specificity for substrates having a negatively charged head group and short chains including taurocyamine, guanidino propanoic and butanoic acids. May protect cells by detoxifying potentially harmful amounts of guanidino acids. Metabolizes L-arginine with low efficiency. This is Guanidino acid hydrolase, mitochondrial (AGMAT) from Homo sapiens (Human).